Reading from the N-terminus, the 178-residue chain is Cytochrome b6-f complex iron-sulfur subunit 2 (178 aa).

A helical transmembrane segment spans residues 17–36 (LLNFFTGAIVATTASAAIYP). The 101-residue stretch at 61 to 161 (GHPIPASQIL…VQVKDDYIWI (101 aa)) folds into the Rieske domain. [2Fe-2S] cluster contacts are provided by C107, H109, C125, and H128. An intrachain disulfide couples C112 to C127.

It belongs to the Rieske iron-sulfur protein family. In terms of assembly, the 4 large subunits of the cytochrome b6-f complex are cytochrome b6, subunit IV (17 kDa polypeptide, PetD), cytochrome f and the Rieske protein, while the 4 small subunits are PetG, PetL, PetM and PetN. The complex functions as a dimer. [2Fe-2S] cluster serves as cofactor.

The protein localises to the cellular thylakoid membrane. It catalyses the reaction 2 oxidized [plastocyanin] + a plastoquinol + 2 H(+)(in) = 2 reduced [plastocyanin] + a plastoquinone + 4 H(+)(out). Component of the cytochrome b6-f complex, which mediates electron transfer between photosystem II (PSII) and photosystem I (PSI), cyclic electron flow around PSI, and state transitions. This chain is Cytochrome b6-f complex iron-sulfur subunit 2, found in Nostoc sp. (strain PCC 7120 / SAG 25.82 / UTEX 2576).